A 273-amino-acid chain; its full sequence is SPRY domain-containing SOCS box protein 1 (273 aa).

Position 31 is a phosphotyrosine (Tyr31). The B30.2/SPRY domain occupies 33 to 231; sequence KPTRLDLLLD…IRMRYLNGLD (199 aa). One can recognise an SOCS box domain in the interval 232-273; it reads PEPLPLMDLCRRSVRLALGKERLGAIPALPLPASLKAYLLYQ.

Belongs to the SPSB family. Component of the probable ECS(SPSB1) E3 ubiquitin-protein ligase complex which contains CUL5, RNF7/RBX2, Elongin BC complex and SPSB1. Interacts with CUL5, RNF7, ELOB and ELOC. Directly interacts with MET tyrosine kinase domain in the presence and in the absence of HGF, however HGF treatment has a positive effect on this interaction. When phosphorylated, interacts with RASA1 without affecting its stability. Interacts (via B30.2/SPRY domain) with PAWR; this interaction is direct and occurs in association with the Elongin BC complex. Interacts with EPHB2. Interacts with NOS2.

It localises to the cytoplasm. It is found in the cytosol. It functions in the pathway protein modification; protein ubiquitination. In terms of biological role, substrate recognition component of a SCF-like ECS (Elongin BC-CUL2/5-SOCS-box protein) E3 ubiquitin-protein ligase complex which mediates the ubiquitination and subsequent proteasomal degradation of target proteins. Negatively regulates nitric oxide (NO) production and limits cellular toxicity in activated macrophages by mediating the ubiquitination and proteasomal degradation of NOS2. Acts as a bridge which links the NOS2 with the ECS E3 ubiquitin ligase complex components ELOC and CUL5. This is SPRY domain-containing SOCS box protein 1 (Spsb1) from Mus musculus (Mouse).